Consider the following 478-residue polypeptide: Alpha-1,3-mannosyl-glycoprotein 4-beta-N-acetylglucosaminyltransferase C (478 aa).

Over 1–23 (MFKFHQMKHIFEILDKMRCLRKR) the chain is Cytoplasmic. Residues 24-44 (STVSFLGVLVIFLLFMNLYIE) form a helical; Signal-anchor for type II membrane protein membrane-spanning segment. Residues 45-478 (DSYVLEGDKQ…IIRSISIWTS (434 aa)) lie on the Lumenal side of the membrane. Residues Asn-84 and Asn-215 are each glycosylated (N-linked (GlcNAc...) asparagine).

This sequence belongs to the glycosyltransferase 54 family. A divalent metal cation is required as a cofactor.

The protein resides in the golgi apparatus membrane. It carries out the reaction N(4)-{beta-D-GlcNAc-(1-&gt;2)-alpha-D-Man-(1-&gt;3)-[beta-D-GlcNAc-(1-&gt;2)-alpha-D-Man-(1-&gt;6)]-beta-D-Man-(1-&gt;4)-beta-D-GlcNAc-(1-&gt;4)-beta-D-GlcNAc}-L-asparaginyl-[protein] + UDP-N-acetyl-alpha-D-glucosamine = N(4)-{beta-D-GlcNAc-(1-&gt;2)-[beta-D-GlcNAc-(1-&gt;4)]-alpha-D-Man-(1-&gt;3)-[beta-D-GlcNAc-(1-&gt;2)-alpha-D-Man-(1-&gt;6)]-beta-D-Man-(1-&gt;4)-beta-D-GlcNAc-(1-&gt;4)-beta-D-GlcNAc}-L-asparaginyl-[protein] + UDP + H(+). It functions in the pathway protein modification; protein glycosylation. In terms of biological role, glycosyltransferase that participates in the transfer of N-acetylglucosamine (GlcNAc) to the core mannose residues of N-linked glycans. Catalyzes the formation of the GlcNAcbeta1-4 branch on the GlcNAcbeta1-2Manalpha1-3 arm of the core structure of N-linked glycans. Essential for the production of tri- and tetra-antennary N-linked sugar chains. Does not catalyze the transfer of GlcNAc to the Manalpha1-6 arm to form GlcNAcBeta1-4Manalpha1-6 linkage ('GnT-VI' activity). The polypeptide is Alpha-1,3-mannosyl-glycoprotein 4-beta-N-acetylglucosaminyltransferase C (MGAT4C) (Macaca fascicularis (Crab-eating macaque)).